The sequence spans 233 residues: Large ribosomal subunit protein uL1 (233 aa).

The protein belongs to the universal ribosomal protein uL1 family. As to quaternary structure, part of the 50S ribosomal subunit.

In terms of biological role, binds directly to 23S rRNA. The L1 stalk is quite mobile in the ribosome, and is involved in E site tRNA release. Protein L1 is also a translational repressor protein, it controls the translation of the L11 operon by binding to its mRNA. The chain is Large ribosomal subunit protein uL1 from Psychrobacter cryohalolentis (strain ATCC BAA-1226 / DSM 17306 / VKM B-2378 / K5).